A 131-amino-acid chain; its full sequence is MSMQDPIADMLTRIRNGQAANKVSVKMPSAKLKVAIAKLLKDEGYITDYAVASEGNKAELEVTLKYFQGRPVVETIQRVSRPGLRIYKGKDELPKVMGGLGIAIVSTSKGLMTDRAARLAGMGGEVICYVA.

This sequence belongs to the universal ribosomal protein uS8 family. In terms of assembly, part of the 30S ribosomal subunit. Contacts proteins S5 and S12.

Its function is as follows. One of the primary rRNA binding proteins, it binds directly to 16S rRNA central domain where it helps coordinate assembly of the platform of the 30S subunit. The protein is Small ribosomal subunit protein uS8 of Shewanella amazonensis (strain ATCC BAA-1098 / SB2B).